The following is a 324-amino-acid chain: Pyruvate synthase subunit PorB (324 aa).

3 residues coordinate [4Fe-4S] cluster: Cys-26, Cys-29, and Cys-57. The disordered stretch occupies residues 150-172 (TGNQRSGSTPPGSDTTTAPVGKK). Residues 155-166 (SGSTPPGSDTTT) show a composition bias toward low complexity. [4Fe-4S] cluster is bound at residue Cys-228.

As to quaternary structure, heterotetramer of one alpha, one beta, one delta and one gamma chain. [4Fe-4S] cluster serves as cofactor.

The catalysed reaction is 2 oxidized [2Fe-2S]-[ferredoxin] + pyruvate + CoA = 2 reduced [2Fe-2S]-[ferredoxin] + acetyl-CoA + CO2 + H(+). The sequence is that of Pyruvate synthase subunit PorB (porB) from Thermotoga maritima (strain ATCC 43589 / DSM 3109 / JCM 10099 / NBRC 100826 / MSB8).